A 466-amino-acid chain; its full sequence is 3-isopropylmalate dehydratase large subunit (466 aa).

The [4Fe-4S] cluster site is built by cysteine 347, cysteine 407, and cysteine 410.

Belongs to the aconitase/IPM isomerase family. LeuC type 1 subfamily. As to quaternary structure, heterodimer of LeuC and LeuD. It depends on [4Fe-4S] cluster as a cofactor.

It catalyses the reaction (2R,3S)-3-isopropylmalate = (2S)-2-isopropylmalate. It functions in the pathway amino-acid biosynthesis; L-leucine biosynthesis; L-leucine from 3-methyl-2-oxobutanoate: step 2/4. Its function is as follows. Catalyzes the isomerization between 2-isopropylmalate and 3-isopropylmalate, via the formation of 2-isopropylmaleate. This chain is 3-isopropylmalate dehydratase large subunit, found in Blochmanniella pennsylvanica (strain BPEN).